The following is a 142-amino-acid chain: Hemoglobin subunit alpha (142 aa).

The Globin domain maps to 2–142 (VLSPADKTNV…VSTVLTSKYR (141 aa)). S4 carries the post-translational modification Phosphoserine. At K8 the chain carries N6-succinyllysine. T9 carries the post-translational modification Phosphothreonine. K12 is modified (N6-succinyllysine). N6-acetyllysine; alternate is present on K17. K17 carries the N6-succinyllysine; alternate modification. Y25 carries the post-translational modification Phosphotyrosine. S36 carries the phosphoserine modification. K41 carries the N6-succinyllysine modification. At S50 the chain carries Phosphoserine. Position 59 (H59) interacts with O2. A heme b-binding site is contributed by H88. S103 bears the Phosphoserine mark. Phosphothreonine is present on T109. Residue S125 is modified to Phosphoserine. A phosphothreonine mark is found at T135 and T138. S139 is subject to Phosphoserine.

It belongs to the globin family. As to quaternary structure, heterotetramer of two alpha chains and two beta chains. Red blood cells.

Involved in oxygen transport from the lung to the various peripheral tissues. Functionally, hemopressin acts as an antagonist peptide of the cannabinoid receptor CNR1. Hemopressin-binding efficiently blocks cannabinoid receptor CNR1 and subsequent signaling. In Ailuropoda melanoleuca (Giant panda), this protein is Hemoglobin subunit alpha (HBA).